Reading from the N-terminus, the 105-residue chain is Protein S100-A11 (105 aa).

Met-1 is subject to N-acetylmethionine. An N-acetylalanine; in Protein S100-A11, N-terminally processed modification is found at Ala-2. N6-acetyllysine is present on Lys-3. Phosphoserine is present on residues Ser-5 and Ser-6. Position 10 is a phosphothreonine (Thr-10). 2 consecutive EF-hand domains span residues 13–49 (CIES…ELAA) and 55–90 (KDPG…LAMA). The residue at position 27 (Lys-27) is an N6-acetyllysine. Ca(2+) contacts are provided by Thr-33, Glu-38, Asp-68, Asn-70, Asp-72, Gln-74, and Glu-79.

The protein belongs to the S-100 family. Homodimer; disulfide-linked. Post-translationally, phosphorylation at Thr-10 by PRKCA significantly suppresses homodimerization and promotes association with NCL/nucleolin which induces nuclear translocation.

The protein resides in the cytoplasm. It is found in the nucleus. Functionally, facilitates the differentiation and the cornification of keratinocytes. The chain is Protein S100-A11 (S100A11) from Homo sapiens (Human).